The chain runs to 953 residues: Translation initiation factor IF-2 (953 aa).

Disordered stretches follow at residues 48-212 (SSFS…KIDF) and 279-367 (TKLK…FHEL). 3 stretches are compositionally biased toward basic and acidic residues: residues 80 to 89 (TGSEHVEKTQ), 98 to 111 (FKAE…EQAA), and 140 to 188 (QGDK…ENHK). Composition is skewed to polar residues over residues 191-207 (RFTN…QSKS) and 282-291 (KSSNISAKST). Over residues 300–317 (ARPEKNRELTHHSQEGQK) the composition is skewed to basic and acidic residues. Residues 322 to 338 (SWNSQNQVRNQKNSNWN) are compositionally biased toward low complexity. Residues 339-348 (KNKKTKKGKN) are compositionally biased toward basic residues. Residues 454 to 623 (ERAPVVTIMG…LLVAEVEELK (170 aa)) enclose the tr-type G domain. A G1 region spans residues 463–470 (GHVDHGKT). GTP is bound at residue 463 to 470 (GHVDHGKT). The G2 stretch occupies residues 488–492 (GITQH). Residues 509 to 512 (DTPG) form a G3 region. GTP contacts are provided by residues 509–513 (DTPGH) and 563–566 (NKID). The interval 563–566 (NKID) is G4. A G5 region spans residues 599 to 601 (SAK).

Belongs to the TRAFAC class translation factor GTPase superfamily. Classic translation factor GTPase family. IF-2 subfamily.

It is found in the cytoplasm. One of the essential components for the initiation of protein synthesis. Protects formylmethionyl-tRNA from spontaneous hydrolysis and promotes its binding to the 30S ribosomal subunits. Also involved in the hydrolysis of GTP during the formation of the 70S ribosomal complex. This is Translation initiation factor IF-2 from Streptococcus pyogenes serotype M3 (strain ATCC BAA-595 / MGAS315).